A 435-amino-acid polypeptide reads, in one-letter code: uncharacterized protein (435 aa).

Residues 7–58 (PFPITKLPLVPRCKILKFFDYGDLLDISLCSKRMAQTVRDIHITADLHYLTL) enclose the F-box domain.

This is an uncharacterized protein from Caenorhabditis elegans.